The following is a 570-amino-acid chain: Arginine--tRNA ligase (570 aa).

Residues 127–137 (ANPTGPLHLGH) carry the 'HIGH' region motif.

The protein belongs to the class-I aminoacyl-tRNA synthetase family. Monomer.

It is found in the cytoplasm. It catalyses the reaction tRNA(Arg) + L-arginine + ATP = L-arginyl-tRNA(Arg) + AMP + diphosphate. This chain is Arginine--tRNA ligase, found in Neorickettsia sennetsu (strain ATCC VR-367 / Miyayama) (Ehrlichia sennetsu).